The following is a 1347-amino-acid chain: Ubinuclein-2 (1347 aa).

The disordered stretch occupies residues 1–134 (MAEPRRVAFI…ETVRLELVLK (134 aa)). Phosphoserine is present on serine 13. 2 stretches are compositionally biased toward basic and acidic residues: residues 16 to 37 (RRRE…EPPR) and 67 to 79 (SREK…EVSR). Positions 93-110 (PEPPPPFPPLPLQPPPPR) are enriched in pro residues. Residues 122–134 (PPRETVRLELVLK) show a composition bias toward basic and acidic residues. Threonine 243 bears the Phosphothreonine mark. A Phosphoserine modification is found at serine 250. A disordered region spans residues 250 to 301 (SDTEEDDITDNQKHKPPKVPKIKEDDIEMKKRKRKEEGEKEKKPRKKVPKQL). Position 252 is a phosphothreonine (threonine 252). Residue lysine 272 forms a Glycyl lysine isopeptide (Lys-Gly) (interchain with G-Cter in SUMO2) linkage. Serine 311, serine 416, serine 419, serine 422, and serine 584 each carry phosphoserine. Disordered regions lie at residues 573 to 597 (LQTD…KRVI), 707 to 740 (ECSP…AAAS), 815 to 849 (LATP…DLAH), 880 to 913 (GLQR…HALG), 981 to 1006 (RLPL…TVPS), and 1035 to 1218 (ASPK…SSVV). The span at 574-584 (QTDEEREKNGS) shows a compositional bias: basic and acidic residues. Positions 721 to 740 (VASVSGPPTSSSTAAIAAAS) are enriched in low complexity. Positions 823-832 (STQTTHSSSL) are enriched in polar residues. The span at 880-911 (GLQRSSQIHTSSSSQTHVSSSSQAQIAASSHA) shows a compositional bias: low complexity. Residues 985-996 (STPSPGNGSQGS) show a composition bias toward polar residues. Over residues 1035 to 1045 (ASPKLAASPKP) the composition is skewed to low complexity. The span at 1046–1060 (ATSPKPLPSPKPSAS) shows a compositional bias: pro residues. Low complexity-rich tracts occupy residues 1061–1070 (PKPSLSAKPS) and 1077–1095 (SKSN…SSPN). At lysine 1068 the chain carries N6-acetyllysine. Composition is skewed to polar residues over residues 1101 to 1164 (GSHS…NSLS) and 1174 to 1185 (RGSNLNSSGANR). A Phosphoserine modification is found at serine 1123. The residue at position 1148 (lysine 1148) is an N6-acetyllysine.

It belongs to the ubinuclein family. Expressed in several cell lines tested, including primary and transformed cell lines.

This chain is Ubinuclein-2 (UBN2), found in Homo sapiens (Human).